A 314-amino-acid chain; its full sequence is DNA-directed RNA polymerase subunit alpha (314 aa).

The segment at M1–T228 is alpha N-terminal domain (alpha-NTD). Residues K245–D314 are alpha C-terminal domain (alpha-CTD).

The protein belongs to the RNA polymerase alpha chain family. In terms of assembly, homodimer. The RNAP catalytic core consists of 2 alpha, 1 beta, 1 beta' and 1 omega subunit. When a sigma factor is associated with the core the holoenzyme is formed, which can initiate transcription.

It catalyses the reaction RNA(n) + a ribonucleoside 5'-triphosphate = RNA(n+1) + diphosphate. Functionally, DNA-dependent RNA polymerase catalyzes the transcription of DNA into RNA using the four ribonucleoside triphosphates as substrates. This chain is DNA-directed RNA polymerase subunit alpha, found in Staphylococcus haemolyticus (strain JCSC1435).